A 130-amino-acid chain; its full sequence is Guanyl-specific ribonuclease T1 (130 aa).

The signal sequence occupies residues 1 to 26; that stretch reads MMYSKLLTLTTLLLPTALALPSLVER. Disulfide bonds link cysteine 28–cysteine 36 and cysteine 32–cysteine 129. Histidine 66 is a catalytic residue. Residue glutamate 84 is the Proton acceptor of the active site. Histidine 118 (proton donor) is an active-site residue.

It belongs to the ribonuclease N1/T1 family. In terms of assembly, monomer.

The enzyme catalyses [RNA] containing guanosine + H2O = an [RNA fragment]-3'-guanosine-3'-phosphate + a 5'-hydroxy-ribonucleotide-3'-[RNA fragment].. In Aspergillus oryzae (strain ATCC 42149 / RIB 40) (Yellow koji mold), this protein is Guanyl-specific ribonuclease T1 (rntA).